A 168-amino-acid chain; its full sequence is Transcription antitermination protein NusB (168 aa).

The protein belongs to the NusB family.

Its function is as follows. Involved in transcription antitermination. Required for transcription of ribosomal RNA (rRNA) genes. Binds specifically to the boxA antiterminator sequence of the ribosomal RNA (rrn) operons. The polypeptide is Transcription antitermination protein NusB (Prosthecochloris aestuarii (strain DSM 271 / SK 413)).